The following is a 189-amino-acid chain: Phosphoheptose isomerase (189 aa).

One can recognise an SIS domain in the interval 34–189; it reads AVETLKNGNK…CQIIDNELSH (156 aa). Position 49–51 (49–51) interacts with substrate; the sequence is NGG. Zn(2+) contacts are provided by His58 and Glu62. Residues Glu62, 91–92, 117–119, Ser122, and Gln169 each bind substrate; these read ND and STS. Zn(2+)-binding residues include Gln169 and His177.

It belongs to the SIS family. GmhA subfamily. As to quaternary structure, homotetramer. Zn(2+) is required as a cofactor.

Its subcellular location is the cytoplasm. It carries out the reaction 2 D-sedoheptulose 7-phosphate = D-glycero-alpha-D-manno-heptose 7-phosphate + D-glycero-beta-D-manno-heptose 7-phosphate. The protein operates within carbohydrate biosynthesis; D-glycero-D-manno-heptose 7-phosphate biosynthesis; D-glycero-alpha-D-manno-heptose 7-phosphate and D-glycero-beta-D-manno-heptose 7-phosphate from sedoheptulose 7-phosphate: step 1/1. Its function is as follows. Catalyzes the isomerization of sedoheptulose 7-phosphate in D-glycero-D-manno-heptose 7-phosphate. This Aliarcobacter butzleri (strain RM4018) (Arcobacter butzleri) protein is Phosphoheptose isomerase.